Reading from the N-terminus, the 453-residue chain is Acid phosphatase (453 aa).

The signal sequence occupies residues 1-18 (MFLQNLFLGFLAVVCANA). His-69 (nucleophile) is an active-site residue. Asn-95, Asn-151, Asn-183, Asn-193, Asn-243, and Asn-319 each carry an N-linked (GlcNAc...) asparagine glycan. Catalysis depends on Asp-331, which acts as the Proton donor. Residues Asn-410, Asn-429, and Asn-443 are each glycosylated (N-linked (GlcNAc...) asparagine).

It belongs to the histidine acid phosphatase family.

The protein localises to the secreted. It is found in the cell wall. It carries out the reaction a phosphate monoester + H2O = an alcohol + phosphate. This Schizosaccharomyces pombe (strain 972 / ATCC 24843) (Fission yeast) protein is Acid phosphatase (pho1).